A 452-amino-acid polypeptide reads, in one-letter code: Tubulin alpha-8 chain (452 aa).

Q15, E74, S143, G147, T148, T182, N209, and N231 together coordinate GTP. Position 74 (E74) interacts with Mg(2+). Residue E257 is part of the active site.

The protein belongs to the tubulin family. As to quaternary structure, dimer of alpha and beta chains. A typical microtubule is a hollow water-filled tube with an outer diameter of 25 nm and an inner diameter of 15 nM. Alpha-beta heterodimers associate head-to-tail to form protofilaments running lengthwise along the microtubule wall with the beta-tubulin subunit facing the microtubule plus end conferring a structural polarity. Microtubules usually have 13 protofilaments but different protofilament numbers can be found in some organisms and specialized cells. Mg(2+) is required as a cofactor.

The protein localises to the cytoplasm. Its subcellular location is the cytoskeleton. The catalysed reaction is GTP + H2O = GDP + phosphate + H(+). In terms of biological role, tubulin is the major constituent of microtubules, a cylinder consisting of laterally associated linear protofilaments composed of alpha- and beta-tubulin heterodimers. Microtubules grow by the addition of GTP-tubulin dimers to the microtubule end, where a stabilizing cap forms. Below the cap, tubulin dimers are in GDP-bound state, owing to GTPase activity of alpha-tubulin. The protein is Tubulin alpha-8 chain (tba-8) of Caenorhabditis elegans.